The sequence spans 467 residues: Nuclear distribution protein PAC1 (467 aa).

Residues 62–96 (GSIIRLQRAITKLEQKCDALQQELDDKTKQLETIV) adopt a coiled-coil conformation. 7 WD repeats span residues 121–160 (QNES…IPLA), 164–212 (AHSK…GELK), 219–262 (AHDS…QSFS), 264–302 (HSEW…SVGT), 325–365 (PYRD…LKPN), 385–424 (GHTS…KTWS), and 426–466 (IHNN…VKII).

It belongs to the WD repeat LIS1/nudF family. As to quaternary structure, self-associates. Interacts with NDL1 and dynein.

It localises to the cytoplasm. The protein resides in the cytoskeleton. It is found in the spindle pole. In terms of biological role, positively regulates the activity of the minus-end directed microtubule motor protein dynein. Plays a central role in positioning the mitotic spindle at the bud neck during cell division. Targets cytoplasmic dynein to microtubule plus ends, thereby promoting dynein-mediated microtubule sliding along the bud cortex and consequently the movement of the mitotic spindle to the bud neck. In Candida glabrata (strain ATCC 2001 / BCRC 20586 / JCM 3761 / NBRC 0622 / NRRL Y-65 / CBS 138) (Yeast), this protein is Nuclear distribution protein PAC1.